The primary structure comprises 174 residues: NADH-quinone oxidoreductase subunit I (174 aa).

2 4Fe-4S ferredoxin-type domains span residues 61 to 91 (LTVK…ITAA) and 103 to 132 (ISYE…LGPE). [4Fe-4S] cluster is bound by residues Cys-71, Cys-74, Cys-77, Cys-81, Cys-112, Cys-115, Cys-118, and Cys-122.

The protein belongs to the complex I 23 kDa subunit family. NDH-1 is composed of 14 different subunits. Subunits NuoA, H, J, K, L, M, N constitute the membrane sector of the complex. It depends on [4Fe-4S] cluster as a cofactor.

It localises to the cell inner membrane. The enzyme catalyses a quinone + NADH + 5 H(+)(in) = a quinol + NAD(+) + 4 H(+)(out). In terms of biological role, NDH-1 shuttles electrons from NADH, via FMN and iron-sulfur (Fe-S) centers, to quinones in the respiratory chain. The immediate electron acceptor for the enzyme in this species is believed to be ubiquinone. Couples the redox reaction to proton translocation (for every two electrons transferred, four hydrogen ions are translocated across the cytoplasmic membrane), and thus conserves the redox energy in a proton gradient. This is NADH-quinone oxidoreductase subunit I from Bdellovibrio bacteriovorus (strain ATCC 15356 / DSM 50701 / NCIMB 9529 / HD100).